Here is a 466-residue protein sequence, read N- to C-terminus: Methylenetetrahydrofolate--tRNA-(uracil-5-)-methyltransferase TrmFO (466 aa).

An FAD-binding site is contributed by Gly-14–Gly-19.

It belongs to the MnmG family. TrmFO subfamily. FAD is required as a cofactor.

The protein localises to the cytoplasm. It carries out the reaction uridine(54) in tRNA + (6R)-5,10-methylene-5,6,7,8-tetrahydrofolate + NADH + H(+) = 5-methyluridine(54) in tRNA + (6S)-5,6,7,8-tetrahydrofolate + NAD(+). The catalysed reaction is uridine(54) in tRNA + (6R)-5,10-methylene-5,6,7,8-tetrahydrofolate + NADPH + H(+) = 5-methyluridine(54) in tRNA + (6S)-5,6,7,8-tetrahydrofolate + NADP(+). In terms of biological role, catalyzes the folate-dependent formation of 5-methyl-uridine at position 54 (M-5-U54) in all tRNAs. The polypeptide is Methylenetetrahydrofolate--tRNA-(uracil-5-)-methyltransferase TrmFO (Brucella suis (strain ATCC 23445 / NCTC 10510)).